A 2048-amino-acid polypeptide reads, in one-letter code: Myoferlin (2048 aa).

A C2 1 domain is found at Met1–Tyr101. Residues Met1–Lys2012 lie on the Cytoplasmic side of the membrane. Residues Tyr124–Ala176 are disordered. Residues Gly144–Arg156 show a composition bias toward acidic residues. Ser170 and Ser174 each carry phosphoserine. 2 C2 domains span residues Thr183–Leu300 and Asp339–Thr475. The segment at Lys186–Lys281 is necessary for interaction with EHD2. Residues Asp390, Asp396, Asp444, Asp446, and Asp452 each coordinate Ca(2+). Lys540 and Lys871 each carry N6-acetyllysine. C2 domains lie at Gly1110–His1238 and Leu1269–Asp1397. Asp1142, Asp1148, Asp1204, and Asp1206 together coordinate Ca(2+). Lys1494 is subject to N6-acetyllysine. 2 consecutive C2 domains span residues Pro1523 to Gly1641 and Gly1759 to Ser1907. Ca(2+) is bound by residues Asp1556, Asp1562, Asp1611, Asp1613, Asp1878, Ser1881, and Asp1884. The span at Glu1964–Ser1975 shows a compositional bias: basic and acidic residues. The disordered stretch occupies residues Glu1964–Pro1986. A helical transmembrane segment spans residues Trp2013–Tyr2033. Residues Ser2034–Ala2048 are Extracellular-facing.

This sequence belongs to the ferlin family. Interacts with EHD1. Interacts with EHD2; the interaction is direct. Interacts with DNM2 and KDR. Interacts with RIPOR2. It depends on Ca(2+) as a cofactor. Expressed in myoblasts (at protein level). Expressed in endothelial cells.

The protein localises to the cell membrane. Its subcellular location is the nucleus membrane. The protein resides in the cytoplasmic vesicle membrane. Functionally, calcium/phospholipid-binding protein that plays a role in the plasmalemma repair mechanism of endothelial cells that permits rapid resealing of membranes disrupted by mechanical stress. Involved in endocytic recycling. Implicated in VEGF signal transduction by regulating the levels of the receptor KDR. This is Myoferlin (Myof) from Mus musculus (Mouse).